The sequence spans 77 residues: Protein AC43 (77 aa).

Functionally, plays a role in the production of occlusion bodies as well as expression of the polyhedrin gene. In Autographa californica nuclear polyhedrosis virus (AcMNPV), this protein is Protein AC43.